The primary structure comprises 1277 residues: Neural cell adhesion molecule L1 (1277 aa).

Positions 1–34 (MAHTQRQQGGSRGQWSRCLLLLLLLPLAAQPGRA) are cleaved as a signal peptide. The Extracellular portion of the chain corresponds to 35 to 1135 (AIQIPSSYYI…VQPSFATQGW (1101 aa)). Ig-like C2-type domains are found at residues 51–140 (PAIT…TAVS), 150–241 (PPVQ…EPIT), 256–344 (PQMM…YTVT), 349–437 (PYWT…TNVY), and 443–528 (PQIL…AEVE). Cystine bridges form between C72/C129, C173/C224, C280/C328, C370/C421, and C465/C514. An N-linked (GlcNAc...) asparagine glycan is attached at N317. 3 N-linked (GlcNAc...) asparagine glycosylation sites follow: N503, N520, and N531. An Ig-like C2-type 6 domain is found at 532 to 623 (RTVILSPPQA…DMVEASSTLT (92 aa)). C554 and C607 are oxidised to a cystine. Fibronectin type-III domains lie at 630 to 725 (PPVH…TPAD), 730 to 824 (NPED…SGED), 829 to 931 (APLN…TPEG), 935 to 1030 (PPMS…TLEG), and 1032 to 1129 (PPAN…VQPS). Positions 714–740 (SKLSDLYKTPADAPDSNPEDVRSESTD) are disordered. N-linked (GlcNAc...) asparagine glycans are attached at residues N794 and N839. 5 N-linked (GlcNAc...) asparagine glycosylation sites follow: N1035, N1046, N1068, N1083, and N1108. The chain crosses the membrane as a helical span at residues 1136-1156 (FIGVVSAVVLLLLVLLILCFI). The Cytoplasmic segment spans residues 1157–1277 (KRSKGGKYSV…ATNGAPSFLN (121 aa)). Disordered regions lie at residues 1163 to 1216 (KYSV…LCSE) and 1232 to 1277 (NMDE…SFLN). The span at 1165–1201 (SVKDKEDGPMDSEARPMKDETFGEYRSLESDLEEKRT) shows a compositional bias: basic and acidic residues. The segment covering 1232–1242 (NMDESLASQFS) has biased composition (polar residues). The span at 1255-1277 (PDNSPLNPAANPPATNGAPSFLN) shows a compositional bias: low complexity.

This sequence belongs to the immunoglobulin superfamily. L1/neurofascin/NgCAM family.

It is found in the cell membrane. It localises to the cell projection. The protein resides in the growth cone. Its function is as follows. Neural cell adhesion molecule involved in the dynamics of cell adhesion and in the generation of transmembrane signals at tyrosine kinase receptors. During brain development, critical in multiple processes, including neuronal migration, axonal growth and fasciculation, and synaptogenesis. In the mature brain, plays a role in the dynamics of neuronal structure and function, including synaptic plasticity. This Takifugu rubripes (Japanese pufferfish) protein is Neural cell adhesion molecule L1 (l1cam).